The sequence spans 407 residues: GTPase Obg (407 aa).

In terms of domain architecture, Obg spans 1–159; it reads MKFVDEVSIR…RDLKMEMKVL (159 aa). The disordered stretch occupies residues 127-150; it reads NTRFKSSTNRAPRQTTPGKPGDQR. Positions 129 to 143 are enriched in polar residues; that stretch reads RFKSSTNRAPRQTTP. An OBG-type G domain is found at 160–333; that stretch reads ADVGLLGLPN…LSHDLMRYLE (174 aa). GTP-binding positions include 166–173, 191–195, 213–216, 283–286, and 314–316; these read GLPNAGKS, FTTLV, DIPG, NKAD, and SAI. Mg(2+)-binding residues include Ser173 and Thr193. The disordered stretch occupies residues 378 to 407; sequence VKSVHDIGDDDDWDDFEDDEDGPEIIYVRD. The segment covering 385 to 400 has biased composition (acidic residues); sequence GDDDDWDDFEDDEDGP.

It belongs to the TRAFAC class OBG-HflX-like GTPase superfamily. OBG GTPase family. As to quaternary structure, monomer. Mg(2+) serves as cofactor.

It is found in the cytoplasm. In terms of biological role, an essential GTPase which binds GTP, GDP and possibly (p)ppGpp with moderate affinity, with high nucleotide exchange rates and a fairly low GTP hydrolysis rate. Plays a role in control of the cell cycle, stress response, ribosome biogenesis and in those bacteria that undergo differentiation, in morphogenesis control. The protein is GTPase Obg of Pseudomonas entomophila (strain L48).